A 358-amino-acid polypeptide reads, in one-letter code: Aromatic amino acid aminotransferase (358 aa).

Position 222 is an N6-(pyridoxal phosphate)lysine (Lys-222).

The protein belongs to the class-II pyridoxal-phosphate-dependent aminotransferase family. As to quaternary structure, homodimer. It depends on pyridoxal 5'-phosphate as a cofactor.

It catalyses the reaction an aromatic L-alpha-amino acid + 2-oxoglutarate = an aromatic oxo-acid + L-glutamate. Aminotransferase that catalyzes the conversion of aromatic amino acids and 2-oxoglutarate into corresponding aromatic oxo acids and L-glutamate. In Mycobacterium sp. (strain KMS), this protein is Aromatic amino acid aminotransferase.